Reading from the N-terminus, the 82-residue chain is Escargot/snail protein homolog (82 aa).

C2H2-type zinc fingers lie at residues 1-5 (HQQFH), 18-40 (FSCKNCDKTYVSLGALKMHIRTH), 44-66 (CKCPICGKAFSRPWLLQGHIRTH), and 72-82 (FSCQHCQSAFV).

Belongs to the snail C2H2-type zinc-finger protein family.

It is found in the nucleus. This chain is Escargot/snail protein homolog, found in Calliphora vicina (Blue blowfly).